Reading from the N-terminus, the 250-residue chain is Vacuolar iron transporter 1 (250 aa).

Topologically, residues 1 to 37 (MSSEEDKITRISIEPEKQTLLDHHTEKHFTAGEIVRD) are cytoplasmic. The chain crosses the membrane as a helical span at residues 38–58 (IIIGVSDGLTVPFALAAGLSG). Topologically, residues 59-64 (ANASSS) are vacuolar. A helical membrane pass occupies residues 65–85 (IVLTAGIAEVAAGAISMGLGG). Topologically, residues 86–169 (YLAAKSEEDH…PDPKRALQSA (84 aa)) are cytoplasmic. The cytoplasmic metal binding domain (MBD) stretch occupies residues 91 to 166 (SEEDHYAREM…LEKPDPKRAL (76 aa)). Positions 103, 106, 114, 117, 150, and 154 each coordinate Fe cation. The helical transmembrane segment at 170–190 (FTIAIAYVLGGFIPLLPYMLI) threads the bilayer. Residues 191–192 (PH) are Vacuolar-facing. A helical transmembrane segment spans residues 193–213 (AMDAVVASVVITLFALFIFGY). Residues 214–227 (AKGHFTGSKPLRSA) lie on the Cytoplasmic side of the membrane. The chain crosses the membrane as a helical span at residues 228 to 248 (FETAFIGAIASAAAFCLAKVV). Residues 249–250 (QH) lie on the Vacuolar side of the membrane.

Belongs to the CCC1 family. Homodimer. The dimeric interaction is mediated by both the transmembrane domains (TMDs) and the cytoplasmic metal binding domain (MBD). In terms of tissue distribution, highly expressed in developing embryo and seed. Expressed in young seedlings, predominantly in the vasculature.

The protein localises to the vacuole membrane. The catalysed reaction is Fe(2+)(in) = Fe(2+)(out). In terms of biological role, vacuolar iron transporter involved in the transfer of iron ions from the cytosol to the vacuole for intracellular iron storage. Involved in regulation of cellular iron homeostasis. Vacuolar iron storage is required for seed embryo and seedling development. This chain is Vacuolar iron transporter 1, found in Arabidopsis thaliana (Mouse-ear cress).